Reading from the N-terminus, the 354-residue chain is 3-dehydroquinate synthase (354 aa).

NAD(+) contacts are provided by residues 100–104 (GATGD), 124–125 (TT), Lys136, Lys145, and 163–166 (FLAT). Residues Glu178, His242, and His256 each contribute to the Zn(2+) site.

Belongs to the sugar phosphate cyclases superfamily. Dehydroquinate synthase family. Co(2+) is required as a cofactor. Requires Zn(2+) as cofactor. NAD(+) serves as cofactor.

It localises to the cytoplasm. The enzyme catalyses 7-phospho-2-dehydro-3-deoxy-D-arabino-heptonate = 3-dehydroquinate + phosphate. It participates in metabolic intermediate biosynthesis; chorismate biosynthesis; chorismate from D-erythrose 4-phosphate and phosphoenolpyruvate: step 2/7. Catalyzes the conversion of 3-deoxy-D-arabino-heptulosonate 7-phosphate (DAHP) to dehydroquinate (DHQ). The sequence is that of 3-dehydroquinate synthase from Staphylococcus haemolyticus (strain JCSC1435).